The chain runs to 28 residues: Fibrinogen alpha chain (28 aa).

Ser-3 is modified (phosphoserine).

As to quaternary structure, heterohexamer; disulfide linked. Contains 2 sets of 3 non-identical chains (alpha, beta and gamma). The 2 heterotrimers are in head to head conformation with the N-termini in a small central domain. Conversion of fibrinogen to fibrin is triggered by thrombin, which cleaves fibrinopeptides A and B from alpha and beta chains, and thus exposes the N-terminal polymerization sites responsible for the formation of the soft clot. The soft clot is converted into the hard clot by factor XIIIA which catalyzes the epsilon-(gamma-glutamyl)lysine cross-linking between gamma chains (stronger) and between alpha chains (weaker) of different monomers. Post-translationally, forms F13A-mediated cross-links between a glutamine and the epsilon-amino group of a lysine residue, forming fibronectin-fibrinogen heteropolymers.

The protein resides in the secreted. In terms of biological role, cleaved by the protease thrombin to yield monomers which, together with fibrinogen beta (FGB) and fibrinogen gamma (FGG), polymerize to form an insoluble fibrin matrix. Fibrin has a major function in hemostasis as one of the primary components of blood clots. In addition, functions during the early stages of wound repair to stabilize the lesion and guide cell migration during re-epithelialization. Was originally thought to be essential for platelet aggregation, based on in vitro studies using anticoagulated blood. However, subsequent studies have shown that it is not absolutely required for thrombus formation in vivo. Enhances expression of SELP in activated platelets via an ITGB3-dependent pathway. Maternal fibrinogen is essential for successful pregnancy. Fibrin deposition is also associated with infection, where it protects against IFNG-mediated hemorrhage. May also facilitate the immune response via both innate and T-cell mediated pathways. This chain is Fibrinogen alpha chain (FGA), found in Canis lupus familiaris (Dog).